Reading from the N-terminus, the 203-residue chain is ATP synthase subunit b (203 aa).

A helical transmembrane segment spans residues 14-34 (FVWPLLGAGLLLAAEGVAWAS).

The protein belongs to the ATPase B chain family. In terms of assembly, F-type ATPases have 2 components, F(1) - the catalytic core - and F(0) - the membrane proton channel. F(1) has five subunits: alpha(3), beta(3), gamma(1), delta(1), epsilon(1). F(0) has three main subunits: a(1), b(2) and c(10-14). The alpha and beta chains form an alternating ring which encloses part of the gamma chain. F(1) is attached to F(0) by a central stalk formed by the gamma and epsilon chains, while a peripheral stalk is formed by the delta and b chains.

Its subcellular location is the cell inner membrane. In terms of biological role, f(1)F(0) ATP synthase produces ATP from ADP in the presence of a proton or sodium gradient. F-type ATPases consist of two structural domains, F(1) containing the extramembraneous catalytic core and F(0) containing the membrane proton channel, linked together by a central stalk and a peripheral stalk. During catalysis, ATP synthesis in the catalytic domain of F(1) is coupled via a rotary mechanism of the central stalk subunits to proton translocation. Functionally, component of the F(0) channel, it forms part of the peripheral stalk, linking F(1) to F(0). This Syntrophobacter fumaroxidans (strain DSM 10017 / MPOB) protein is ATP synthase subunit b.